A 108-amino-acid chain; its full sequence is UPF0060 membrane protein Ent638_1931 (108 aa).

The next 4 helical transmembrane spans lie at 6–26 (LLFF…WLWL), 29–49 (GASV…VWLL), 61–81 (AAYG…VDGV), and 85–105 (AYDW…VAGW).

The protein belongs to the UPF0060 family.

It localises to the cell inner membrane. The protein is UPF0060 membrane protein Ent638_1931 of Enterobacter sp. (strain 638).